The chain runs to 197 residues: Peptidyl-tRNA hydrolase (197 aa).

Residue tyrosine 21 coordinates tRNA. Histidine 26 (proton acceptor) is an active-site residue. Residues tyrosine 72, asparagine 74, and asparagine 120 each coordinate tRNA.

It belongs to the PTH family. As to quaternary structure, monomer.

The protein localises to the cytoplasm. The enzyme catalyses an N-acyl-L-alpha-aminoacyl-tRNA + H2O = an N-acyl-L-amino acid + a tRNA + H(+). Functionally, hydrolyzes ribosome-free peptidyl-tRNAs (with 1 or more amino acids incorporated), which drop off the ribosome during protein synthesis, or as a result of ribosome stalling. Catalyzes the release of premature peptidyl moieties from peptidyl-tRNA molecules trapped in stalled 50S ribosomal subunits, and thus maintains levels of free tRNAs and 50S ribosomes. This chain is Peptidyl-tRNA hydrolase, found in Saccharophagus degradans (strain 2-40 / ATCC 43961 / DSM 17024).